A 493-amino-acid polypeptide reads, in one-letter code: Putative MgpC-like protein MPN_414 (493 aa).

The segment covering 1–14 has biased composition (polar residues); that stretch reads MKPTSLPKNFTNNP. Disordered stretches follow at residues 1–92 and 441–493; these read MKPT…GHNS and KSAR…SGNH. Composition is skewed to basic and acidic residues over residues 25-34 and 44-56; these read DNGRAYRKLN and DSTKDGKGKDKDG. Polar residues-rich tracts occupy residues 72 to 92 and 445 to 472; these read VSSTGSQMSAVTDSQQSGHNS and ENAQSTSDDNSNTKVKWTKPPRTTSPCR. Over residues 482 to 493 the composition is skewed to basic and acidic residues; that stretch reads RVTEEERSSGNH.

Belongs to the MgpC family.

In Mycoplasma pneumoniae (strain ATCC 29342 / M129 / Subtype 1) (Mycoplasmoides pneumoniae), this protein is Putative MgpC-like protein MPN_414.